The following is a 600-amino-acid chain: Chaperone protein DnaK (600 aa).

Phosphothreonine; by autocatalysis is present on Thr-175. Residues 569–578 (SFAQATAQQA) show a composition bias toward low complexity. The interval 569–600 (SFAQATAQQANTSESDPKADDSNTIDAEIKQD) is disordered. A compositionally biased stretch (basic and acidic residues) spans 583 to 600 (SDPKADDSNTIDAEIKQD).

This sequence belongs to the heat shock protein 70 family.

Functionally, acts as a chaperone. This Mesomycoplasma hyopneumoniae (strain 7448) (Mycoplasma hyopneumoniae) protein is Chaperone protein DnaK.